The following is a 511-amino-acid chain: ATP synthase subunit alpha 2 (511 aa).

ATP is bound at residue 173–180; it reads GDRQTGKS.

The protein belongs to the ATPase alpha/beta chains family. In terms of assembly, F-type ATPases have 2 components, CF(1) - the catalytic core - and CF(0) - the membrane proton channel. CF(1) has five subunits: alpha(3), beta(3), gamma(1), delta(1), epsilon(1). CF(0) has three main subunits: a(1), b(2) and c(9-12). The alpha and beta chains form an alternating ring which encloses part of the gamma chain. CF(1) is attached to CF(0) by a central stalk formed by the gamma and epsilon chains, while a peripheral stalk is formed by the delta and b chains.

It is found in the cell inner membrane. The catalysed reaction is ATP + H2O + 4 H(+)(in) = ADP + phosphate + 5 H(+)(out). Its function is as follows. Produces ATP from ADP in the presence of a proton gradient across the membrane. The alpha chain is a regulatory subunit. This chain is ATP synthase subunit alpha 2, found in Nitrosospira multiformis (strain ATCC 25196 / NCIMB 11849 / C 71).